A 475-amino-acid polypeptide reads, in one-letter code: Putative aldehyde dehydrogenase SH0913 (475 aa).

201 to 207 serves as a coordination point for NAD(+); that stretch reads GDGEGVG. Active-site residues include E245 and C279.

This sequence belongs to the aldehyde dehydrogenase family.

The enzyme catalyses an aldehyde + NAD(+) + H2O = a carboxylate + NADH + 2 H(+). In Staphylococcus haemolyticus (strain JCSC1435), this protein is Putative aldehyde dehydrogenase SH0913.